The sequence spans 384 residues: Guanine nucleotide-binding protein alpha-1 subunit (384 aa).

Residue Gly2 is the site of N-myristoyl glycine attachment. A lipid anchor (S-palmitoyl cysteine) is attached at Cys5. In terms of domain architecture, G-alpha spans 38–384; the sequence is HIQKLLLLGA…RRNLFEAGLL (347 aa). A G1 motif region spans residues 41–54; that stretch reads KLLLLGAGESGKST. GTP contacts are provided by Glu49, Ser50, Gly51, Lys52, Ser53, Thr54, Leu188, Tyr189, Thr194, Gly222, Asn288, Lys289, Asp291, and Ala356. Position 53 (Ser53) interacts with Mg(2+). The G2 motif stretch occupies residues 186–194; it reads DVLYARVRT. Residue Thr194 coordinates Mg(2+). The segment at 215 to 224 is G3 motif; that stretch reads YRLFDVGGQR. The segment at 284–291 is G4 motif; it reads MLFLNKFD. The interval 354–359 is G5 motif; it reads TTALDQ.

This sequence belongs to the G-alpha family. As to quaternary structure, g proteins are composed of 3 units; alpha, beta and gamma. The alpha chain contains the guanine nucleotide binding site. It depends on Mg(2+) as a cofactor.

In terms of biological role, guanine nucleotide-binding proteins (G proteins) are involved as modulators or transducers in various transmembrane signaling systems. This Lupinus luteus (European yellow lupine) protein is Guanine nucleotide-binding protein alpha-1 subunit (GPA1).